Reading from the N-terminus, the 278-residue chain is Tryptophan synthase alpha chain (278 aa).

Active-site proton acceptor residues include E50 and D61.

Belongs to the TrpA family. In terms of assembly, tetramer of two alpha and two beta chains.

The enzyme catalyses (1S,2R)-1-C-(indol-3-yl)glycerol 3-phosphate + L-serine = D-glyceraldehyde 3-phosphate + L-tryptophan + H2O. It participates in amino-acid biosynthesis; L-tryptophan biosynthesis; L-tryptophan from chorismate: step 5/5. Functionally, the alpha subunit is responsible for the aldol cleavage of indoleglycerol phosphate to indole and glyceraldehyde 3-phosphate. The protein is Tryptophan synthase alpha chain of Nitrobacter hamburgensis (strain DSM 10229 / NCIMB 13809 / X14).